The primary structure comprises 263 residues: Regulatory protein RecX (263 aa).

This sequence belongs to the RecX family.

It localises to the cytoplasm. In terms of biological role, modulates RecA activity. In Bacillus pumilus (strain SAFR-032), this protein is Regulatory protein RecX.